A 209-amino-acid chain; its full sequence is Thymidine kinase (209 aa).

ATP-binding positions include 9 to 16 (AAMNAGKS) and 88 to 91 (DEAQ). Glu-89 functions as the Proton acceptor in the catalytic mechanism. Cys-146, Cys-148, Cys-183, and His-186 together coordinate Zn(2+).

Belongs to the thymidine kinase family. As to quaternary structure, homotetramer.

It is found in the cytoplasm. The enzyme catalyses thymidine + ATP = dTMP + ADP + H(+). This Legionella pneumophila (strain Paris) protein is Thymidine kinase.